The following is a 238-amino-acid chain: Aspartate/glutamate leucyltransferase (238 aa).

The protein belongs to the R-transferase family. Bpt subfamily.

The protein localises to the cytoplasm. The enzyme catalyses N-terminal L-glutamyl-[protein] + L-leucyl-tRNA(Leu) = N-terminal L-leucyl-L-glutamyl-[protein] + tRNA(Leu) + H(+). It carries out the reaction N-terminal L-aspartyl-[protein] + L-leucyl-tRNA(Leu) = N-terminal L-leucyl-L-aspartyl-[protein] + tRNA(Leu) + H(+). Functions in the N-end rule pathway of protein degradation where it conjugates Leu from its aminoacyl-tRNA to the N-termini of proteins containing an N-terminal aspartate or glutamate. This is Aspartate/glutamate leucyltransferase from Shewanella sp. (strain ANA-3).